Here is a 142-residue protein sequence, read N- to C-terminus: Large ribosomal subunit protein uL13 (142 aa).

It belongs to the universal ribosomal protein uL13 family. Part of the 50S ribosomal subunit.

In terms of biological role, this protein is one of the early assembly proteins of the 50S ribosomal subunit, although it is not seen to bind rRNA by itself. It is important during the early stages of 50S assembly. This chain is Large ribosomal subunit protein uL13, found in Buchnera aphidicola subsp. Acyrthosiphon pisum (strain 5A).